Here is a 431-residue protein sequence, read N- to C-terminus: Protein CLT2, chloroplastic (431 aa).

The N-terminal 79 residues, 1–79 (MDTVLMATTP…PMRRPRFSVG (79 aa)), are a transit peptide targeting the chloroplast. 10 consecutive transmembrane segments (helical) span residues 99–119 (VVIVALAVANRVLYKLALVPM), 122–142 (YPFFMAQLTTFGYVLIYFTIL), 163–183 (FAIIGFLEALGVATGMAAAAM), 188–208 (VIPILNQTYLVWQLLFALLIL), 212–232 (FLLNQIAGCLLVAVGVVVAVS), 244–264 (IGFLWPAVLVASAAFQAGASI), 284–304 (IFVVNSFGSGFQALFVFLLLP), 343–363 (ILPLLYISTNLAFNISLLHLV), 365–385 (ISSAIVSSLTMMLSVPLAVYI), and 403–423 (FTMGCIVLVLGLLLYNIPTTP).

It belongs to the CRT-like transporter family.

The protein resides in the plastid. It is found in the chloroplast membrane. Functionally, involved in thiol transport from the plastid to the cytosol. Transports probably both glutathione (GSH) and its precursor, gamma-glutamylcysteine (gamma-EC). This is Protein CLT2, chloroplastic from Arabidopsis thaliana (Mouse-ear cress).